The following is a 372-amino-acid chain: Aminomethyltransferase (372 aa).

This sequence belongs to the GcvT family. As to quaternary structure, the glycine cleavage system is composed of four proteins: P, T, L and H.

The enzyme catalyses N(6)-[(R)-S(8)-aminomethyldihydrolipoyl]-L-lysyl-[protein] + (6S)-5,6,7,8-tetrahydrofolate = N(6)-[(R)-dihydrolipoyl]-L-lysyl-[protein] + (6R)-5,10-methylene-5,6,7,8-tetrahydrofolate + NH4(+). In terms of biological role, the glycine cleavage system catalyzes the degradation of glycine. The sequence is that of Aminomethyltransferase from Paraburkholderia phymatum (strain DSM 17167 / CIP 108236 / LMG 21445 / STM815) (Burkholderia phymatum).